The primary structure comprises 435 residues: GTPase Der (435 aa).

EngA-type G domains are found at residues 4–167 (KIVA…SKND) and 175–350 (TKIA…QSLS). GTP is bound by residues 10–17 (GKPNVGKS), 57–61 (DTGGI), 119–122 (NKYD), 181–188 (GKPNVGKS), 228–232 (DTAGI), and 293–296 (NKWD). The region spanning 351–435 (VKVKTYVLNE…PINLIFRERK (85 aa)) is the KH-like domain.

Belongs to the TRAFAC class TrmE-Era-EngA-EngB-Septin-like GTPase superfamily. EngA (Der) GTPase family. Associates with the 50S ribosomal subunit.

In terms of biological role, GTPase that plays an essential role in the late steps of ribosome biogenesis. The protein is GTPase Der of Mycoplasma capricolum subsp. capricolum (strain California kid / ATCC 27343 / NCTC 10154).